A 149-amino-acid polypeptide reads, in one-letter code: SsrA-binding protein (149 aa).

The protein belongs to the SmpB family.

The protein resides in the cytoplasm. In terms of biological role, required for rescue of stalled ribosomes mediated by trans-translation. Binds to transfer-messenger RNA (tmRNA), required for stable association of tmRNA with ribosomes. tmRNA and SmpB together mimic tRNA shape, replacing the anticodon stem-loop with SmpB. tmRNA is encoded by the ssrA gene; the 2 termini fold to resemble tRNA(Ala) and it encodes a 'tag peptide', a short internal open reading frame. During trans-translation Ala-aminoacylated tmRNA acts like a tRNA, entering the A-site of stalled ribosomes, displacing the stalled mRNA. The ribosome then switches to translate the ORF on the tmRNA; the nascent peptide is terminated with the 'tag peptide' encoded by the tmRNA and targeted for degradation. The ribosome is freed to recommence translation, which seems to be the essential function of trans-translation. The chain is SsrA-binding protein from Acholeplasma laidlawii (strain PG-8A).